A 189-amino-acid chain; its full sequence is Dual-action ribosomal maturation protein DarP (189 aa).

Residues 1 to 22 (MWKNGAMRGCNKETGEFLGPSR) form a disordered region.

This sequence belongs to the DarP family.

The protein localises to the cytoplasm. Member of a network of 50S ribosomal subunit biogenesis factors which assembles along the 30S-50S interface, preventing incorrect 23S rRNA structures from forming. Promotes peptidyl transferase center (PTC) maturation. The chain is Dual-action ribosomal maturation protein DarP from Xylella fastidiosa (strain Temecula1 / ATCC 700964).